A 647-amino-acid chain; its full sequence is Paraneoplastic antigen Ma6E (647 aa).

Disordered stretches follow at residues 111–199, 227–254, 508–580, and 608–647; these read QPQG…AGGA, GAAGEAGGAGEAGAAGEAGGAGEGRAAG, AAAP…VPWG, and RGQEARKPPLEGLQTILEEPENEDEDGAGDEGQPKSSQGK. Gly residues-rich tracts occupy residues 122-149, 158-199, and 227-251; these read GEGGGAGEAGGVGEVGAAGEAGGTGEAG, GEAG…AGGA, and GAAGEAGGAGEAGAAGEAGGAGEGR. Over residues 517 to 570 the composition is skewed to low complexity; sequence PAAAQASPAQGNASEAGPGAEDAAEAASATKEAARGAPAAGEGESAPAGPEGLG. The segment covering 625–636 has biased composition (acidic residues); that stretch reads EEPENEDEDGAG.

The protein is Paraneoplastic antigen Ma6E of Homo sapiens (Human).